Reading from the N-terminus, the 677-residue chain is Methionine--tRNA ligase (677 aa).

Positions 15–25 (PYANGSIHLGH) match the 'HIGH' region motif. Residues C146, C149, C159, and C162 each contribute to the Zn(2+) site. The 'KMSKS' region signature appears at 333 to 337 (KMSKS). K336 provides a ligand contact to ATP. The tRNA-binding domain occupies 575–677 (DFAKVDLRVA…DGAKPGQQVK (103 aa)).

It belongs to the class-I aminoacyl-tRNA synthetase family. MetG type 1 subfamily. As to quaternary structure, homodimer. The cofactor is Zn(2+).

The protein localises to the cytoplasm. The enzyme catalyses tRNA(Met) + L-methionine + ATP = L-methionyl-tRNA(Met) + AMP + diphosphate. In terms of biological role, is required not only for elongation of protein synthesis but also for the initiation of all mRNA translation through initiator tRNA(fMet) aminoacylation. In Klebsiella pneumoniae (strain 342), this protein is Methionine--tRNA ligase.